Reading from the N-terminus, the 66-residue chain is Large ribosomal subunit protein bL35 (66 aa).

Residues 1–26 are compositionally biased toward basic residues; the sequence is MPKMKTHRGSAKRFKKTASGKLKRGH. Residues 1–29 are disordered; it reads MPKMKTHRGSAKRFKKTASGKLKRGHAYT.

The protein belongs to the bacterial ribosomal protein bL35 family.

The protein is Large ribosomal subunit protein bL35 of Geobacillus kaustophilus (strain HTA426).